Here is a 170-residue protein sequence, read N- to C-terminus: Large ribosomal subunit protein uL10 (170 aa).

It belongs to the universal ribosomal protein uL10 family. As to quaternary structure, part of the ribosomal stalk of the 50S ribosomal subunit. The N-terminus interacts with L11 and the large rRNA to form the base of the stalk. The C-terminus forms an elongated spine to which L12 dimers bind in a sequential fashion forming a multimeric L10(L12)X complex.

In terms of biological role, forms part of the ribosomal stalk, playing a central role in the interaction of the ribosome with GTP-bound translation factors. The protein is Large ribosomal subunit protein uL10 of Corynebacterium urealyticum (strain ATCC 43042 / DSM 7109).